The following is a 148-amino-acid chain: FAD synthase (148 aa).

Residues 11 to 12 (TF), 16 to 19 (HPGH), asparagine 94, and tyrosine 121 each bind ATP.

Belongs to the archaeal FAD synthase family. As to quaternary structure, homodimer. The cofactor is a divalent metal cation.

It catalyses the reaction FMN + ATP + H(+) = FAD + diphosphate. It participates in cofactor biosynthesis; FAD biosynthesis; FAD from FMN: step 1/1. In terms of biological role, catalyzes the transfer of the AMP portion of ATP to flavin mononucleotide (FMN) to produce flavin adenine dinucleotide (FAD) coenzyme. This chain is FAD synthase, found in Methanoregula boonei (strain DSM 21154 / JCM 14090 / 6A8).